The chain runs to 160 residues: Cytochrome b6-f complex subunit 4 (160 aa).

Transmembrane regions (helical) follow at residues 36 to 56 (LLYV…GLAI), 95 to 115 (LLGV…PFIE), and 131 to 151 (TIFL…TMPI).

This sequence belongs to the cytochrome b family. PetD subfamily. The 4 large subunits of the cytochrome b6-f complex are cytochrome b6, subunit IV (17 kDa polypeptide, petD), cytochrome f and the Rieske protein, while the 4 small subunits are petG, petL, petM and petN. The complex functions as a dimer.

It localises to the plastid. The protein resides in the chloroplast thylakoid membrane. Its function is as follows. Component of the cytochrome b6-f complex, which mediates electron transfer between photosystem II (PSII) and photosystem I (PSI), cyclic electron flow around PSI, and state transitions. This is Cytochrome b6-f complex subunit 4 from Porphyra purpurea (Red seaweed).